Here is a 673-residue protein sequence, read N- to C-terminus: F-box/LRR-repeat protein 17 (673 aa).

Residues 1–39 (MGHVAPHASKKEHVAPHAAEKDHVAPHASKKEHVAPHAA) form a disordered region. Residues 9–39 (SKKEHVAPHAAEKDHVAPHASKKEHVAPHAA) show a composition bias toward basic and acidic residues. Positions 291–338 (PLHINQLPSSLLLKIFSNLSLNERCILASLVCKYWRDLCLDSQFWKQL) constitute an F-box domain.

This sequence belongs to the FBXL17 family. Part of the SCF (SKP1-CUL1-F-box) E3 ubiquitin-protein ligase complex SCF(FBXL17). Interacts with BTB domain-containing proteins; specifically recognizes and binds a conserved degron of non-consecutive residues present at the interface of BTB dimers of aberrant composition. As to expression, expressed in the neuro-ectoderm of embryos.

It localises to the cytoplasm. The protein localises to the nucleus. Substrate-recognition component of the SCF(FBXL17) E3 ubiquitin ligase complex, a key component of a quality control pathway required to ensure functional dimerization of BTB domain-containing proteins (dimerization quality control, DQC). FBXL17 specifically recognizes and binds a conserved degron of non-consecutive residues present at the interface of BTB dimers of aberrant composition: aberrant BTB dimer are then ubiquitinated by the SCF(FBXL17) complex and degraded by the proteasome. The ability of the SCF(FBXL17) complex to eliminate compromised BTB dimers is required for the differentiation and survival of neural crest and neuronal cells. This chain is F-box/LRR-repeat protein 17, found in Xenopus laevis (African clawed frog).